A 392-amino-acid polypeptide reads, in one-letter code: Stilbene synthase 5 (392 aa).

Position 55-58 (55-58 (KFNR)) interacts with substrate. Residue Cys164 is part of the active site. Residues Leu267 and 305–307 (GGP) contribute to the substrate site.

Belongs to the thiolase-like superfamily. Chalcone/stilbene synthases family. In terms of assembly, homodimer.

The protein localises to the cytoplasm. The enzyme catalyses 4-coumaroyl-CoA + 3 malonyl-CoA + 3 H(+) = trans-resveratrol + 4 CO2 + 4 CoA. It participates in phytoalexin biosynthesis; 3,4',5-trihydroxystilbene biosynthesis; 3,4',5-trihydroxystilbene from trans-4-coumarate: step 2/2. In terms of biological role, mediates resistance to pathogens which are sensitive to stilbenes. The chain is Stilbene synthase 5 from Vitis vinifera (Grape).